We begin with the raw amino-acid sequence, 695 residues long: N-terminal acetyltransferase A complex subunit-like protein C418.02 (695 aa).

TPR repeat units lie at residues 8-41, 43-75, 76-109, 111-143, 145-177, 217-250, 262-296, 365-398, 399-432, and 477-510; these read EAFLFDRSIDQFEKGQYSKSLKTIQSVLKKKPKH, DSVALLGLNLCKLHDSRSALLKCGYASSIDPKS, QFCWHALAIVYRETKDYNNSLKCYQNALAISPNN, SLWYDAAYLQAQLGLYQPLFDNWNRLLQLDSSN, EYRLCFTLSAFLSGNYKESLEQIQYLISSCNLS, FNFEHIKADFAFRQKNYEESIYLYARLLIKFPNR, WNFYKSGGLALDLLLKRTDSLIKTFSEILQTGISV, LWCTYCLCLAHYKLGDYEESNYWLNLAIDHTPTY, PELFLAKAKIFLCMGEIEEALCSFKRSVELDKSD, and VWFLVEDGESLLRQKLYGLALKRFHSIYQIYKKW.

In terms of assembly, component of the N-terminal acetyltransferase A (NatA) complex.

The protein localises to the cytoplasm. It is found in the nucleus. Functionally, non-catalytic component of the NatA N-terminal acetyltransferase, which catalyzes acetylation of proteins beginning with Met-Ser, Met-Gly and Met-Ala. N-acetylation plays a role in normal eukaryotic translation and processing, protect against proteolytic degradation and protein turnover. This Schizosaccharomyces pombe (strain 972 / ATCC 24843) (Fission yeast) protein is N-terminal acetyltransferase A complex subunit-like protein C418.02.